The chain runs to 257 residues: tRNA-cytidine(32) 2-sulfurtransferase (257 aa).

Residues 37 to 42 (SGGKDS) carry the PP-loop motif motif. Residues C112, C115, and C202 each coordinate [4Fe-4S] cluster.

Belongs to the TtcA family. As to quaternary structure, homodimer. It depends on Mg(2+) as a cofactor. Requires [4Fe-4S] cluster as cofactor.

It is found in the cytoplasm. The catalysed reaction is cytidine(32) in tRNA + S-sulfanyl-L-cysteinyl-[cysteine desulfurase] + AH2 + ATP = 2-thiocytidine(32) in tRNA + L-cysteinyl-[cysteine desulfurase] + A + AMP + diphosphate + H(+). The protein operates within tRNA modification. Functionally, catalyzes the ATP-dependent 2-thiolation of cytidine in position 32 of tRNA, to form 2-thiocytidine (s(2)C32). The sulfur atoms are provided by the cysteine/cysteine desulfurase (IscS) system. The sequence is that of tRNA-cytidine(32) 2-sulfurtransferase from Geobacter metallireducens (strain ATCC 53774 / DSM 7210 / GS-15).